Here is a 316-residue protein sequence, read N- to C-terminus: Small ribosomal subunit protein mS26 (316 aa).

Residues 41-71 (TTRSARDSVSIPPDSPNYIKVPEPPQSSEVR) form a disordered region.

The protein belongs to the mitochondrion-specific ribosomal protein mS26 family. Component of the mitochondrial small ribosomal subunit (mt-SSU). Mature N.crassa 74S mitochondrial ribosomes consist of a small (37S) and a large (54S) subunit. The 37S small subunit contains a 16S ribosomal RNA (16S mt-rRNA) and 32 different proteins. The 54S large subunit contains a 23S rRNA (23S mt-rRNA) and 42 different proteins.

It is found in the mitochondrion. Its function is as follows. Component of the mitochondrial ribosome (mitoribosome), a dedicated translation machinery responsible for the synthesis of mitochondrial genome-encoded proteins, including at least some of the essential transmembrane subunits of the mitochondrial respiratory chain. The mitoribosomes are attached to the mitochondrial inner membrane and translation products are cotranslationally integrated into the membrane. This is Small ribosomal subunit protein mS26 (pet123) from Neurospora crassa (strain ATCC 24698 / 74-OR23-1A / CBS 708.71 / DSM 1257 / FGSC 987).